Reading from the N-terminus, the 178-residue chain is Large ribosomal subunit protein uL6 (178 aa).

This sequence belongs to the universal ribosomal protein uL6 family. As to quaternary structure, part of the 50S ribosomal subunit.

Functionally, this protein binds to the 23S rRNA, and is important in its secondary structure. It is located near the subunit interface in the base of the L7/L12 stalk, and near the tRNA binding site of the peptidyltransferase center. The polypeptide is Large ribosomal subunit protein uL6 (Corynebacterium aurimucosum (strain ATCC 700975 / DSM 44827 / CIP 107346 / CN-1) (Corynebacterium nigricans)).